The chain runs to 79 residues: Cytochrome b (79 aa).

Transmembrane regions (helical) follow at residues 1 to 7, 31 to 52, and 67 to 79; these read TAMFLAM, WLIR…YLHI, and WNVG…LTMM. Heme b-binding residues include His-37 and His-51.

This sequence belongs to the cytochrome b family. As to quaternary structure, the cytochrome bc1 complex contains 3 respiratory subunits (MT-CYB, CYC1 and UQCRFS1), 2 core proteins (UQCRC1 and UQCRC2) and probably 6 low-molecular weight proteins. The cofactor is heme b.

It is found in the mitochondrion inner membrane. Functionally, component of the ubiquinol-cytochrome c reductase complex (complex III or cytochrome b-c1 complex) that is part of the mitochondrial respiratory chain. The b-c1 complex mediates electron transfer from ubiquinol to cytochrome c. Contributes to the generation of a proton gradient across the mitochondrial membrane that is then used for ATP synthesis. This chain is Cytochrome b (mt-cyb), found in Hypsophrys nicaraguensis (Moga).